Here is a 369-residue protein sequence, read N- to C-terminus: tRNA 2-selenouridine synthase (369 aa).

Residues 12 to 136 (FLDDIPLMDV…LRNFLFETTR (125 aa)) enclose the Rhodanese domain. The active-site S-selanylcysteine intermediate is the cysteine 95.

The protein belongs to the SelU family. Monomer.

The enzyme catalyses 5-methylaminomethyl-2-thiouridine(34) in tRNA + selenophosphate + (2E)-geranyl diphosphate + H2O + H(+) = 5-methylaminomethyl-2-selenouridine(34) in tRNA + (2E)-thiogeraniol + phosphate + diphosphate. The catalysed reaction is 5-methylaminomethyl-2-thiouridine(34) in tRNA + (2E)-geranyl diphosphate = 5-methylaminomethyl-S-(2E)-geranyl-thiouridine(34) in tRNA + diphosphate. It carries out the reaction 5-methylaminomethyl-S-(2E)-geranyl-thiouridine(34) in tRNA + selenophosphate + H(+) = 5-methylaminomethyl-2-(Se-phospho)selenouridine(34) in tRNA + (2E)-thiogeraniol. It catalyses the reaction 5-methylaminomethyl-2-(Se-phospho)selenouridine(34) in tRNA + H2O = 5-methylaminomethyl-2-selenouridine(34) in tRNA + phosphate. Its function is as follows. Involved in the post-transcriptional modification of the uridine at the wobble position (U34) of tRNA(Lys), tRNA(Glu) and tRNA(Gln). Catalyzes the conversion of 2-thiouridine (S2U-RNA) to 2-selenouridine (Se2U-RNA). Acts in a two-step process involving geranylation of 2-thiouridine (S2U) to S-geranyl-2-thiouridine (geS2U) and subsequent selenation of the latter derivative to 2-selenouridine (Se2U) in the tRNA chain. The polypeptide is tRNA 2-selenouridine synthase (Pseudomonas aeruginosa (strain LESB58)).